We begin with the raw amino-acid sequence, 302 residues long: UDP-3-O-acyl-N-acetylglucosamine deacetylase (302 aa).

Residues H78, H235, and D239 each coordinate Zn(2+). H262 functions as the Proton donor in the catalytic mechanism.

It belongs to the LpxC family. It depends on Zn(2+) as a cofactor.

The catalysed reaction is a UDP-3-O-[(3R)-3-hydroxyacyl]-N-acetyl-alpha-D-glucosamine + H2O = a UDP-3-O-[(3R)-3-hydroxyacyl]-alpha-D-glucosamine + acetate. Its pathway is glycolipid biosynthesis; lipid IV(A) biosynthesis; lipid IV(A) from (3R)-3-hydroxytetradecanoyl-[acyl-carrier-protein] and UDP-N-acetyl-alpha-D-glucosamine: step 2/6. Functionally, catalyzes the hydrolysis of UDP-3-O-myristoyl-N-acetylglucosamine to form UDP-3-O-myristoylglucosamine and acetate, the committed step in lipid A biosynthesis. In Bdellovibrio bacteriovorus (strain ATCC 15356 / DSM 50701 / NCIMB 9529 / HD100), this protein is UDP-3-O-acyl-N-acetylglucosamine deacetylase.